Consider the following 319-residue polypeptide: ATP-dependent 6-phosphofructokinase (319 aa).

G11 is an ATP binding site. ADP is bound at residue 21–25; sequence RAVTR. ATP contacts are provided by residues 72–73 and 102–105; these read RY and GDGS. D103 is a binding site for Mg(2+). Substrate is bound at residue 125-127; it reads TID. The active-site Proton acceptor is the D127. Position 154 (R154) interacts with ADP. Residues R162 and 169–171 contribute to the substrate site; that span reads MGR. ADP contacts are provided by residues 185-187 and 213-215; these read GAD and KDH. Residues E222, R243, and 249–252 each bind substrate; that span reads HMQR.

It belongs to the phosphofructokinase type A (PFKA) family. ATP-dependent PFK group I subfamily. Prokaryotic clade 'B1' sub-subfamily. Homotetramer. Mg(2+) is required as a cofactor.

It is found in the cytoplasm. The catalysed reaction is beta-D-fructose 6-phosphate + ATP = beta-D-fructose 1,6-bisphosphate + ADP + H(+). It participates in carbohydrate degradation; glycolysis; D-glyceraldehyde 3-phosphate and glycerone phosphate from D-glucose: step 3/4. Its activity is regulated as follows. Allosterically activated by ADP and other diphosphonucleosides, and allosterically inhibited by phosphoenolpyruvate. The binding affinities for these effectors are decreased however, and therefore the allosteric effect becomes apparent only at high effector concentrations. Functionally, catalyzes the phosphorylation of D-fructose 6-phosphate to fructose 1,6-bisphosphate by ATP, the first committing step of glycolysis. This is ATP-dependent 6-phosphofructokinase from Lactobacillus delbrueckii subsp. bulgaricus.